The sequence spans 331 residues: PHD finger protein 11 (331 aa).

The C2HC pre-PHD-type zinc finger occupies 42–78 (KRTCALCPKDVEYNVLYFAQSENIAAHENCLLYSSGL). The segment at 108–160 (LKCKFCHKRGATVGCDLKNCNKNYHFFCAKKDDAVPQSDGVRGIYKLLCQQHA) adopts a PHD-type zinc-finger fold.

As to quaternary structure, interacts with BRCA1 and RELA. Highly expressed in T and B-cells, as well as natural killer and mature dendritic cells. Expressed at higher levels in Th1 as compared to Th2 cells. Expressed at low levels in all normal tissues tested, including lung, testis, small intestine, breast, liver and placenta.

It localises to the nucleus. In terms of biological role, positive regulator of Th1-type cytokine gene expression. The protein is PHD finger protein 11 (PHF11) of Homo sapiens (Human).